Here is a 911-residue protein sequence, read N- to C-terminus: Chromatin assembly factor 1 subunit A (911 aa).

The binds PCNA stretch occupies residues 1-31 (MLEEPEAATRTAAAVDCKDRPGFPVKRLIQA). Residues 166–200 (HMEEEPGSPGDPKRTGDCQAGSLQSCPELTPGSRT) are disordered. A binds CBX1 and CBX3 chromo shadow domains region spans residues 176-327 (DPKRTGDCQA…LHRDREQQRE (152 aa)). The span at 186-200 (GSLQSCPELTPGSRT) shows a compositional bias: polar residues. 2 positions are modified to phosphoserine: S190 and S208. A PxVxL motif motif is present at residues 217-230 (FIEKVPVVVLEDIL). 2 disordered regions span residues 250–408 (SESE…EEEK) and 578–618 (DSDD…VPHG). A compositionally biased stretch (low complexity) spans 265–281 (LSHSSTNSSSPTSSPEG). S293 is modified (phosphoserine). Positions 310–408 (STEKGRSKLH…EEKRLREEEK (99 aa)) are enriched in basic and acidic residues. 2 stretches are compositionally biased toward acidic residues: residues 578 to 589 (DSDDEWEEEEPG) and 597 to 612 (GDEDDDVGEDEDEDDG). Residues 621–657 (SEDEGVTEECADPENHKVHQKLKAKEWDELLAKGKRF) form a necessary for homodimerization and competence for chromatin assembly region. The tract at residues 639–911 (HQKLKAKEWD…APIPAPTLCK (273 aa)) is binds to p60. S776 is modified (phosphoserine). Disordered regions lie at residues 819–843 (PSAPREDSGSASTEGPGQSTPMLLK) and 866–886 (GSGDMDGFQADTEEDEEDDTD). Residues 827-839 (GSASTEGPGQSTP) are compositionally biased toward polar residues. At T838 the chain carries Phosphothreonine. Acidic residues predominate over residues 876–886 (DTEEDEEDDTD).

Belongs to the CHAF1A family. As to quaternary structure, homodimer. Part of the CAF-1 complex that contains RBBP4, CHAF1B and CHAF1A. CHAF1A binds directly to CHAF1B. Only minor amounts of RBBP4 are complexed with CHAF1A and CHAF1B in G1 phase. Interacts with PCNA; the interaction is direct. Interacts (via the PxVxL motif) with CBX5; the interaction is direct. Interacts with MBD1. Interacts with histones H3.1, H3.2 and H3.1t.

It localises to the nucleus. Functionally, acts as a component of the histone chaperone complex chromatin assembly factor 1 (CAF-1), which assembles histone octamers onto DNA during replication and repair. CAF-1 performs the first step of the nucleosome assembly process, bringing newly synthesized histones H3 and H4 to replicating DNA; histones H2A/H2B can bind to this chromatin precursor subsequent to DNA replication to complete the histone octamer. It may play a role in heterochromatin maintenance in proliferating cells by bringing newly synthesized cbx proteins to heterochromatic DNA replication foci. In Mus musculus (Mouse), this protein is Chromatin assembly factor 1 subunit A.